Consider the following 562-residue polypeptide: Membrane protein insertase YidC (562 aa).

Residues Q4–E24 form a helical membrane-spanning segment. Residues T33–D71 are disordered. The span at E35–D58 shows a compositional bias: acidic residues. Positions T61 to D71 are enriched in basic and acidic residues. Helical transmembrane passes span M330–L350, I356–Y376, L426–L446, and I499–V519.

Belongs to the OXA1/ALB3/YidC family. Type 1 subfamily. Interacts with the Sec translocase complex via SecD. Specifically interacts with transmembrane segments of nascent integral membrane proteins during membrane integration.

The protein localises to the cell inner membrane. In terms of biological role, required for the insertion and/or proper folding and/or complex formation of integral membrane proteins into the membrane. Involved in integration of membrane proteins that insert both dependently and independently of the Sec translocase complex, as well as at least some lipoproteins. Aids folding of multispanning membrane proteins. This chain is Membrane protein insertase YidC, found in Alkalilimnicola ehrlichii (strain ATCC BAA-1101 / DSM 17681 / MLHE-1).